The chain runs to 378 residues: MTENKSFKESHPLDDFISDKELSNTTIQKEKLTIEQQKQVDTISKQINPLDNEGLLAFGSDLQKQMSQFSHQMLDEVQSKDVGPIGDTLSDLMSKLKSVNPNELNTDKPSMLKRIFSRAKSSINEIFSRMQSVSAQVDRITIQLQKHQTHLTRDIELLDTLYDKNKQYFDDLSLHIIAAQQKKLQLENEKLPQLQQQAQQSTNQMDIQQVSDMQQFIDRLDKRIYDLQLSRQIALQTAPQIRMIQNVNQALAEKIQSSILTSIPLWKNQMAIALTLMRQRNAVAAQRAVTDTTNDLLTANAEMLKQNAIETATENERGIVDLDTLKRTQRNIIETIEETLIIQQHGREERQLAEKELQQLEQDLKSHLVNIKGPNKQS.

Belongs to the TelA family.

The sequence is that of TelA-like protein SAV1406 from Staphylococcus aureus (strain Mu50 / ATCC 700699).